We begin with the raw amino-acid sequence, 331 residues long: uncharacterized protein (331 aa).

Gly-43 to Ser-50 provides a ligand contact to ATP.

This is an uncharacterized protein from Methanocaldococcus jannaschii (strain ATCC 43067 / DSM 2661 / JAL-1 / JCM 10045 / NBRC 100440) (Methanococcus jannaschii).